Reading from the N-terminus, the 301-residue chain is Porphobilinogen deaminase (301 aa).

S-(dipyrrolylmethanemethyl)cysteine is present on Cys242.

This sequence belongs to the HMBS family. Monomer. It depends on dipyrromethane as a cofactor.

The enzyme catalyses 4 porphobilinogen + H2O = hydroxymethylbilane + 4 NH4(+). Its pathway is porphyrin-containing compound metabolism; protoporphyrin-IX biosynthesis; coproporphyrinogen-III from 5-aminolevulinate: step 2/4. Tetrapolymerization of the monopyrrole PBG into the hydroxymethylbilane pre-uroporphyrinogen in several discrete steps. The polypeptide is Porphobilinogen deaminase (Rickettsia canadensis (strain McKiel)).